The following is a 214-amino-acid chain: Pyridoxine/pyridoxamine 5'-phosphate oxidase (214 aa).

Substrate-binding positions include 8-11 (RKSY) and K67. FMN is bound by residues 62 to 67 (RVVLLK), 77 to 78 (YT), K84, and Q106. Positions 124, 128, and 132 each coordinate substrate. FMN contacts are provided by residues 141-142 (QS) and W186. 192 to 194 (RLH) serves as a coordination point for substrate. R196 provides a ligand contact to FMN.

This sequence belongs to the pyridoxamine 5'-phosphate oxidase family. Homodimer. FMN is required as a cofactor.

The enzyme catalyses pyridoxamine 5'-phosphate + O2 + H2O = pyridoxal 5'-phosphate + H2O2 + NH4(+). It catalyses the reaction pyridoxine 5'-phosphate + O2 = pyridoxal 5'-phosphate + H2O2. The protein operates within cofactor metabolism; pyridoxal 5'-phosphate salvage; pyridoxal 5'-phosphate from pyridoxamine 5'-phosphate: step 1/1. Its pathway is cofactor metabolism; pyridoxal 5'-phosphate salvage; pyridoxal 5'-phosphate from pyridoxine 5'-phosphate: step 1/1. Catalyzes the oxidation of either pyridoxine 5'-phosphate (PNP) or pyridoxamine 5'-phosphate (PMP) into pyridoxal 5'-phosphate (PLP). This is Pyridoxine/pyridoxamine 5'-phosphate oxidase from Flavobacterium johnsoniae (strain ATCC 17061 / DSM 2064 / JCM 8514 / BCRC 14874 / CCUG 350202 / NBRC 14942 / NCIMB 11054 / UW101) (Cytophaga johnsonae).